A 339-amino-acid polypeptide reads, in one-letter code: Putative zinc metalloprotease FN1322 (339 aa).

Histidine 17 contacts Zn(2+). Glutamate 18 is an active-site residue. A Zn(2+)-binding site is contributed by histidine 21. A run of 3 helical transmembrane segments spans residues phenylalanine 88–alanine 110, phenylalanine 262–leucine 284, and glycine 318–tryptophan 335. One can recognise a PDZ domain in the interval phenylalanine 96–lysine 179.

This sequence belongs to the peptidase M50B family. Zn(2+) serves as cofactor.

It localises to the cell membrane. The chain is Putative zinc metalloprotease FN1322 from Fusobacterium nucleatum subsp. nucleatum (strain ATCC 25586 / DSM 15643 / BCRC 10681 / CIP 101130 / JCM 8532 / KCTC 2640 / LMG 13131 / VPI 4355).